We begin with the raw amino-acid sequence, 578 residues long: DNA mismatch repair protein MutL (578 aa).

Belongs to the DNA mismatch repair MutL/HexB family.

In terms of biological role, this protein is involved in the repair of mismatches in DNA. It is required for dam-dependent methyl-directed DNA mismatch repair. May act as a 'molecular matchmaker', a protein that promotes the formation of a stable complex between two or more DNA-binding proteins in an ATP-dependent manner without itself being part of a final effector complex. This chain is DNA mismatch repair protein MutL, found in Carboxydothermus hydrogenoformans (strain ATCC BAA-161 / DSM 6008 / Z-2901).